The chain runs to 110 residues: Large ribosomal subunit protein uL22 (110 aa).

This sequence belongs to the universal ribosomal protein uL22 family. As to quaternary structure, part of the 50S ribosomal subunit.

Functionally, this protein binds specifically to 23S rRNA; its binding is stimulated by other ribosomal proteins, e.g. L4, L17, and L20. It is important during the early stages of 50S assembly. It makes multiple contacts with different domains of the 23S rRNA in the assembled 50S subunit and ribosome. The globular domain of the protein is located near the polypeptide exit tunnel on the outside of the subunit, while an extended beta-hairpin is found that lines the wall of the exit tunnel in the center of the 70S ribosome. This is Large ribosomal subunit protein uL22 from Maridesulfovibrio salexigens (strain ATCC 14822 / DSM 2638 / NCIMB 8403 / VKM B-1763) (Desulfovibrio salexigens).